A 423-amino-acid chain; its full sequence is Sporulation-regulated protein 28 (423 aa).

A Septin-type G domain is found at 28–342; that stretch reads KGLQLSILLL…ENYRAKVLTE (315 aa). Residues 38 to 45 form a G1 motif region; sequence GEKGSGKS. Residues 38–45, glycine 124, 204–212, and arginine 291 contribute to the GTP site; these read GEKGSGKS and KADGLTETE. Residues 121–124 form a G3 motif region; sequence LFPG. Residues 203–206 are G4 motif; sequence PKAD. Residues 360 to 381 are compositionally biased toward polar residues; that stretch reads RGSVSNVSTRRNSASRTLGNPD. Residues 360-385 are disordered; it reads RGSVSNVSTRRNSASRTLGNPDTNDE. Positions 384 to 417 form a coiled coil; it reads DENAYQIHKEIDEKNRIIEDYQRKIDLLEKMLAA.

The protein belongs to the TRAFAC class TrmE-Era-EngA-EngB-Septin-like GTPase superfamily. Septin GTPase family. Interacts with itself. Interacts with CDC11 and SPR3; probably to form a ring at the bud neck.

Its subcellular location is the membrane. It is found in the bud neck. Its function is as follows. Septins are GTPases involved in cytokinesis that assemble into filaments and form a ring at the cleavage site. May act by recruiting MYO1 and HOF1, a protein involved in septation, to the site of cleavage. Septins are also involved in cell morphogenesis, bud site selection, chitin deposition, cell cycle regulation, cell compartmentalization and spore wall formation. The chain is Sporulation-regulated protein 28 (SPR28) from Saccharomyces cerevisiae (strain ATCC 204508 / S288c) (Baker's yeast).